Here is a 501-residue protein sequence, read N- to C-terminus: MGERTPMLKMVGVSKSFPGVKALDNVSLMAYGGEVTALMGENGAGKSTLMKILSGVYKKDEGKIFIEGREVEVKGIKSAEEAGITIIHQELSVLNNLTISENIFLGNEKHSKFTGRINKKLLDERSKMFLEQIGCDIDPNRLVSTLNVGEKQMIEIAKALTKNARIIIMDEPTTALTDVETENLFKVIENLRKKGIAIIYISHRMEEIFKICHRVEVLRDGKYAGSAEIKDIDNDKLIAMMVGRTIEDQFPYRDVKKGDLALEVKNLSCKEGVKGASFTLRKGEILGIAGLMGSGRTELAKTIFGEYKRTSGEISLNGSPININCISDAINNGICYLSEDRKKEGCILGMSVGENMTLCNLKKYENKFKSLDKKEEAKDIEYYIKKINIKTPNKEQFIKNLSGGNQQKVILAKWLMLSPEVLIIDEPTRGIDVGAKKEIYELLNELKASGKAIIMISSDLPEVLGISDRIMVMSEGRISGELNRDEANQESIMKLAVGINN.

ABC transporter domains follow at residues 8 to 245 and 255 to 500; these read LKMV…VGRT and VKKG…VGIN. 40 to 47 lines the ATP pocket; it reads GENGAGKS.

It belongs to the ABC transporter superfamily. Ribose importer (TC 3.A.1.2.1) family. The complex is composed of an ATP-binding protein (RbsA), two transmembrane proteins (RbsC) and a solute-binding protein (RbsB).

It is found in the cell membrane. It catalyses the reaction D-ribose(out) + ATP + H2O = D-ribose(in) + ADP + phosphate + H(+). Its function is as follows. Part of the ABC transporter complex RbsABC involved in ribose import. Responsible for energy coupling to the transport system. The protein is Ribose import ATP-binding protein RbsA of Clostridium perfringens (strain 13 / Type A).